Here is a 292-residue protein sequence, read N- to C-terminus: Glutamate racemase (292 aa).

Substrate contacts are provided by residues 28–29 (DS) and 60–61 (YG). Cys91 acts as the Proton donor/acceptor in catalysis. 92–93 (NT) provides a ligand contact to substrate. Residue Cys200 is the Proton donor/acceptor of the active site. Position 201–202 (201–202 (TH)) interacts with substrate.

This sequence belongs to the aspartate/glutamate racemases family.

It catalyses the reaction L-glutamate = D-glutamate. The protein operates within cell wall biogenesis; peptidoglycan biosynthesis. Provides the (R)-glutamate required for cell wall biosynthesis. This is Glutamate racemase from Trichormus variabilis (strain ATCC 29413 / PCC 7937) (Anabaena variabilis).